We begin with the raw amino-acid sequence, 396 residues long: L-lactate dehydrogenase (396 aa).

The FMN hydroxy acid dehydrogenase domain occupies 1–380 (MIISAASDYR…TQDSLVQGLG (380 aa)). Tyr-24 contributes to the substrate binding site. The FMN site is built by Ser-106 and Gln-127. Tyr-129 provides a ligand contact to substrate. An FMN-binding site is contributed by Thr-155. Arg-164 serves as a coordination point for substrate. FMN is bound at residue Lys-251. The active-site Proton acceptor is the His-275. Residue Arg-278 participates in substrate binding. Residue 306 to 330 (DSGIRNGLDVVRMIALGADTVLLGR) coordinates FMN.

The protein belongs to the FMN-dependent alpha-hydroxy acid dehydrogenase family. FMN serves as cofactor.

Its subcellular location is the cell inner membrane. The enzyme catalyses (S)-lactate + A = pyruvate + AH2. Functionally, catalyzes the conversion of L-lactate to pyruvate. Is coupled to the respiratory chain. This Escherichia coli O7:K1 (strain IAI39 / ExPEC) protein is L-lactate dehydrogenase.